A 154-amino-acid polypeptide reads, in one-letter code: Protein X (154 aa).

The tract at residues 68–117 is mitochondrial targeting sequence; it reads PCALRFTSARRMETTVNAHQILPKVLHKRTLGLSAMSTTDLEAYFKDCLF.

The protein belongs to the orthohepadnavirus protein X family. In terms of assembly, may form homodimer. May interact with host CEBPA, CFLAR, CREB1, DDB1, E4F1, HBXIP, HSPD1/HSP60, NFKBIA, POLR2E and SMAD4. Interacts with host SMC5-SMC6 complex and induces its degradation. Interacts with host TRPC4AP; leading to prevent ubiquitination of TRPC4AP. Interacts with host PLSCR1; this interaction promotes ubiquitination and degradation of HBx and impairs HBx-mediated cell proliferation. Post-translationally, a fraction may be phosphorylated in insect cells and HepG2 cells, a human hepatoblastoma cell line. Phosphorylated in vitro by host protein kinase C or mitogen-activated protein kinase. N-acetylated in insect cells.

Its subcellular location is the host cytoplasm. The protein resides in the host nucleus. It localises to the host mitochondrion. Functionally, multifunctional protein that plays a role in silencing host antiviral defenses and promoting viral transcription. Does not seem to be essential for HBV infection. May be directly involved in development of cirrhosis and liver cancer (hepatocellular carcinoma). Most of cytosolic activities involve modulation of cytosolic calcium. The effect on apoptosis is controversial depending on the cell types in which the studies have been conducted. May induce apoptosis by localizing in mitochondria and causing loss of mitochondrial membrane potential. May also modulate apoptosis by binding host CFLAR, a key regulator of the death-inducing signaling complex (DISC). Promotes viral transcription by using the host E3 ubiquitin ligase DDB1 to target the SMC5-SMC6 complex to proteasomal degradation. This host complex would otherwise bind to viral episomal DNA, and prevents its transcription. Moderately stimulates transcription of many different viral and cellular transcription elements. Promoters and enhancers stimulated by HBx contain DNA binding sites for NF-kappa-B, AP-1, AP-2, c-EBP, ATF/CREB, or the calcium-activated factor NF-AT. This Hepatitis B virus genotype E (isolate Chimpanzee/Ch195/1999) (HBV-E) protein is Protein X.